The sequence spans 167 residues: Large ribosomal subunit protein uL10 (167 aa).

It belongs to the universal ribosomal protein uL10 family. As to quaternary structure, part of the ribosomal stalk of the 50S ribosomal subunit. The N-terminus interacts with L11 and the large rRNA to form the base of the stalk. The C-terminus forms an elongated spine to which L12 dimers bind in a sequential fashion forming a multimeric L10(L12)X complex.

Forms part of the ribosomal stalk, playing a central role in the interaction of the ribosome with GTP-bound translation factors. The protein is Large ribosomal subunit protein uL10 of Lactiplantibacillus plantarum (strain ATCC BAA-793 / NCIMB 8826 / WCFS1) (Lactobacillus plantarum).